A 683-amino-acid polypeptide reads, in one-letter code: Elongation factor G 2 (683 aa).

The tr-type G domain maps to 4–279 (QQMRNIGIMA…AVVEYLPAPQ (276 aa)). GTP-binding positions include 13 to 20 (AHVDAGKT), 77 to 81 (DTPGH), and 131 to 134 (NKMD).

This sequence belongs to the TRAFAC class translation factor GTPase superfamily. Classic translation factor GTPase family. EF-G/EF-2 subfamily.

It localises to the cytoplasm. Functionally, catalyzes the GTP-dependent ribosomal translocation step during translation elongation. During this step, the ribosome changes from the pre-translocational (PRE) to the post-translocational (POST) state as the newly formed A-site-bound peptidyl-tRNA and P-site-bound deacylated tRNA move to the P and E sites, respectively. Catalyzes the coordinated movement of the two tRNA molecules, the mRNA and conformational changes in the ribosome. This is Elongation factor G 2 (fusB) from Treponema pallidum (strain Nichols).